We begin with the raw amino-acid sequence, 129 residues long: Protein Turandot B2 (129 aa).

A signal peptide spans 1–21 (MNSATSLMCFALLLISPLCMG).

The protein belongs to the Turandot family.

Its subcellular location is the secreted. Functionally, a humoral factor that may play a role in stress tolerance. This chain is Protein Turandot B2 (TotB2), found in Drosophila erecta (Fruit fly).